The chain runs to 373 residues: Dual-specificity RNA methyltransferase RlmN (373 aa).

Residue glutamate 94 is the Proton acceptor of the active site. The 240-residue stretch at 100 to 339 folds into the Radical SAM core domain; it reads EDDRATLCVS…VIVRKTRGDD (240 aa). Cysteine 107 and cysteine 344 are disulfide-bonded. [4Fe-4S] cluster is bound by residues cysteine 114, cysteine 118, and cysteine 121. Residues 168-169, serine 200, 222-224, and asparagine 301 contribute to the S-adenosyl-L-methionine site; these read GE and SIH. The active-site S-methylcysteine intermediate is the cysteine 344.

It belongs to the radical SAM superfamily. RlmN family. [4Fe-4S] cluster is required as a cofactor.

It is found in the cytoplasm. It carries out the reaction adenosine(2503) in 23S rRNA + 2 reduced [2Fe-2S]-[ferredoxin] + 2 S-adenosyl-L-methionine = 2-methyladenosine(2503) in 23S rRNA + 5'-deoxyadenosine + L-methionine + 2 oxidized [2Fe-2S]-[ferredoxin] + S-adenosyl-L-homocysteine. It catalyses the reaction adenosine(37) in tRNA + 2 reduced [2Fe-2S]-[ferredoxin] + 2 S-adenosyl-L-methionine = 2-methyladenosine(37) in tRNA + 5'-deoxyadenosine + L-methionine + 2 oxidized [2Fe-2S]-[ferredoxin] + S-adenosyl-L-homocysteine. Specifically methylates position 2 of adenine 2503 in 23S rRNA and position 2 of adenine 37 in tRNAs. m2A2503 modification seems to play a crucial role in the proofreading step occurring at the peptidyl transferase center and thus would serve to optimize ribosomal fidelity. This Shewanella sp. (strain ANA-3) protein is Dual-specificity RNA methyltransferase RlmN.